The sequence spans 215 residues: Small ribosomal subunit protein uS7 (215 aa).

It belongs to the universal ribosomal protein uS7 family. As to quaternary structure, part of the 30S ribosomal subunit.

Functionally, one of the primary rRNA binding proteins, it binds directly to 16S rRNA where it nucleates assembly of the head domain of the 30S subunit. Is located at the subunit interface close to the decoding center. The polypeptide is Small ribosomal subunit protein uS7 (Thermococcus gammatolerans (strain DSM 15229 / JCM 11827 / EJ3)).